A 92-amino-acid polypeptide reads, in one-letter code: Progonadoliberin-1 (92 aa).

The signal sequence occupies residues 1–23 (MELVPKFLAGLILLTLCVGGCYA). Glutamine 24 carries the pyrrolidone carboxylic acid modification. Glycine 33 is modified (glycine amide).

The protein belongs to the GnRH family.

Its subcellular location is the secreted. In terms of biological role, stimulates the secretion of gonadotropins; it stimulates the secretion of both luteinizing and follicle-stimulating hormones. This is Progonadoliberin-1 (GNRH1) from Tupaia belangeri (Common tree shrew).